A 313-amino-acid chain; its full sequence is Adhesin MafA 2/3 (313 aa).

The N-terminal stretch at 1 to 14 (MKTLLLLIPLVLTA) is a signal peptide. C15 is lipidated: N-palmitoyl cysteine. A lipid anchor (S-diacylglycerol cysteine) is attached at C15. A compositionally biased stretch (polar residues) spans 282-298 (GDTTAQNRPDFKQNNGK). The tract at residues 282–313 (GDTTAQNRPDFKQNNGKNPDVGNEVIRRRKGG) is disordered.

The protein belongs to the MafA family.

Its subcellular location is the cell outer membrane. In Neisseria gonorrhoeae (strain ATCC 700825 / FA 1090), this protein is Adhesin MafA 2/3 (mafA2).